Here is a 1046-residue protein sequence, read N- to C-terminus: UDP-N-acetylglucosamine--peptide N-acetylglucosaminyltransferase 110 kDa subunit (1046 aa).

N-acetylalanine is present on A2. S3 and S4 each carry phosphoserine; by GSK3-beta; alternate. 2 O-linked (GlcNAc) serine; alternate glycosylation sites follow: S3 and S4. S20 carries the post-translational modification Phosphoserine. 12 TPR repeats span residues 21–54, 89–122, 123–156, 157–190, 191–224, 225–258, 259–292, 293–326, 327–360, 361–394, 395–428, and 429–462; these read FQGLAELAHREYQAGDFEAAERHCMQLWRQEPDN, AEAYSNLGNVYKERGQLQEAIEHYRHALRLKPDF, IDGYINLAAALVAAGDMEGAVQAYVSALQYNPDL, YCVRSDLGNLLKALGRLEEAKACYLKAIETQPNF, AVAWSNLGCVFNAQGEIWLAIHHFEKAVTLDPNF, LDAYINLGNVLKEARIFDRAVAAYLRALSLSPNH, AVVHGNLACVYYEQGLIDLAIDTYRRAIELQPHF, PDAYCNLANALKEKGSVAEAEDCYNTALRLCPTH, ADSLNNLANIKREQGNIEEAVRLYRKALEVFPEF, AAAHSNLASVLQQQGKLQEALMHYKEAIRISPTF, ADAYSNMGNTLKEMQDVQGALQCYTRAIQINPAF, and ADAHSNLASIHKDSGNIPEAIASYRTALKLKPDF. The O-linked (GlcNAc) serine; by autocatalysis glycan is linked to S399. T454 is modified (phosphothreonine). Residues 463-473 form a TPR 13; truncated repeat; it reads PDAYCNLAHCL. The short motif at 464 to 466 is the DFP motif element; that stretch reads DAY. The Nuclear localization signal signature appears at 487–503; that stretch reads KKLVSIVADQLEKNRLP. H508 functions as the Proton acceptor in the catalytic mechanism. UDP contacts are provided by residues Q849, K852, 906-908, 911-914, 930-932, and D935; these read APK, HVRR, and HTT. Y989 bears the Phosphotyrosine mark. Residues 991–1010 form a required for phosphatidylinositol 3,4,5-triphosphate binding region; the sequence is KKIRGKVWKQRISSPLFNTK.

It belongs to the glycosyltransferase 41 family. O-GlcNAc transferase subfamily. As to quaternary structure, monomer; may exist in different oligomerization states in cells. Homotrimer, oligomerizes via TPR repeats 6 and 7. Trimerization is not necessary for activity in vitro, however it increases affinity for UDP-GlcNAc. Component of a THAP1/THAP3-HCFC1-OGT complex. Component of the NSL complex at least composed of MOF/KAT8, KANSL1, KANSL2, KANSL3, MCRS1, PHF20, OGT1/OGT, WDR5 and HCFC1. Found in a complex with KIF5B, RHOT1, RHOT2 and TRAK1. Found in a complex composed of at least SINHCAF, SIN3A, HDAC1, SAP30, RBBP4, OGT and TET1. Component of a complex composed of KMT2E/MLL5, OGT and USP7; the complex stabilizes KMT2E/MLL5, preventing KMT2E/MLL5 ubiquitination and proteasomal-mediated degradation. Interacts (via TPRs 1-6) with SIN3A; the interaction mediates transcriptional repression in parallel with histone deacetylase. Interacts (via TPR 5-6) with TET1, TET2 and TET3. Interacts (via TPR repeats 6 and 7) with ATXN10. Interacts with NSD2. Interacts with PROSER1; this interaction mediates TET2 O-GlcNAcylation and stability by promoting the interaction between OGT and TET2. In terms of processing, ubiquitinated by the SCF(FBXO31) complex, leading to its proteasomal degradation. Post-translationally, phosphorylation on Ser-3 or Ser-4 by GSK3-beta positively regulates its activity. Phosphorylation at Thr-454 by AMPK promotes nuclear localization. Glycosylated via autocatalysis; O-GlcNAcylation at Ser-399 promotes nuclear localization.

The protein localises to the nucleus. It is found in the cytoplasm. It carries out the reaction L-seryl-[protein] + UDP-N-acetyl-alpha-D-glucosamine = 3-O-(N-acetyl-beta-D-glucosaminyl)-L-seryl-[protein] + UDP + H(+). It catalyses the reaction L-threonyl-[protein] + UDP-N-acetyl-alpha-D-glucosamine = 3-O-(N-acetyl-beta-D-glucosaminyl)-L-threonyl-[protein] + UDP + H(+). Its pathway is protein modification; protein glycosylation. Inhibited by UDP. Functionally, catalyzes the transfer of a single N-acetylglucosamine from UDP-GlcNAc to a serine or threonine residue in cytoplasmic and nuclear proteins resulting in their modification with a beta-linked N-acetylglucosamine (O-GlcNAc). Glycosylates a large and diverse number of proteins including histone H2B, AKT1, AMPK, ATG4B, CAPRIN1, EZH2, FNIP1, GSDMD, KRT7, LMNA, LMNB1, LMNB2, RPTOR, HOXA1, PFKL, KMT2E/MLL5, MAPT/TAU, TET2, RBL2, RET, NOD2 and HCFC1. Can regulate their cellular processes via cross-talk between glycosylation and phosphorylation or by affecting proteolytic processing. Involved in insulin resistance in muscle and adipocyte cells via glycosylating insulin signaling components and inhibiting the 'Thr-308' phosphorylation of AKT1, enhancing IRS1 phosphorylation and attenuating insulin signaling. Involved in glycolysis regulation by mediating glycosylation of 6-phosphofructokinase PFKL, inhibiting its activity. Plays a key role in chromatin structure by mediating O-GlcNAcylation of 'Ser-112' of histone H2B: recruited to CpG-rich transcription start sites of active genes via its interaction with TET proteins (TET1, TET2 or TET3). As part of the NSL complex indirectly involved in acetylation of nucleosomal histone H4 on several lysine residues. O-GlcNAcylation of 'Ser-75' of EZH2 increases its stability, and facilitating the formation of H3K27me3 by the PRC2/EED-EZH2 complex. Stabilizes KMT2E/MLL5 by mediating its glycosylation, thereby preventing KMT2E/MLL5 ubiquitination. Regulates circadian oscillation of the clock genes and glucose homeostasis in the liver. Stabilizes clock proteins BMAL1 and CLOCK through O-glycosylation, which prevents their ubiquitination and subsequent degradation. Promotes the CLOCK-BMAL1-mediated transcription of genes in the negative loop of the circadian clock such as PER1/2 and CRY1/2. O-glycosylates HCFC1 and regulates its proteolytic processing and transcriptional activity. Component of a THAP1/THAP3-HCFC1-OGT complex that is required for the regulation of the transcriptional activity of RRM1. Regulates mitochondrial motility in neurons by mediating glycosylation of TRAK1. Promotes autophagy by mediating O-glycosylation of ATG4B. Acts as a regulator of mTORC1 signaling by mediating O-glycosylation of RPTOR and FNIP1: O-GlcNAcylation of RPTOR in response to glucose sufficiency promotes activation of the mTORC1 complex. In terms of biological role, catalyzes the transfer of a single N-acetylglucosamine from UDP-GlcNAc to a serine or threonine residue. Acts on cytoplasmic and nuclear proteins resulting in their modification with a beta-linked N-acetylglucosamine (O-GlcNAc). Glycosylates a large and diverse number of proteins including histone H2B, AKT1, ATG4B, EZH2, PFKL, KMT2E/MLL5, MAPT/TAU, NOD2 and HCFC1. Can regulate their cellular processes via cross-talk between glycosylation and phosphorylation or by affecting proteolytic processing. Probably by glycosylating KMT2E/MLL5, stabilizes KMT2E/MLL5 by preventing its ubiquitination. Involved in insulin resistance in muscle and adipocyte cells via glycosylating insulin signaling components and inhibiting the 'Thr-308' phosphorylation of AKT1, enhancing IRS1 phosphorylation and attenuating insulin signaling. Involved in glycolysis regulation by mediating glycosylation of 6-phosphofructokinase PFKL, inhibiting its activity. Component of a THAP1/THAP3-HCFC1-OGT complex that is required for the regulation of the transcriptional activity of RRM1. Plays a key role in chromatin structure by mediating O-GlcNAcylation of 'Ser-112' of histone H2B: recruited to CpG-rich transcription start sites of active genes via its interaction with TET proteins (TET1, TET2 or TET3). As part of the NSL complex indirectly involved in acetylation of nucleosomal histone H4 on several lysine residues. O-GlcNAcylation of 'Ser-75' of EZH2 increases its stability, and facilitating the formation of H3K27me3 by the PRC2/EED-EZH2 complex. Regulates circadian oscillation of the clock genes and glucose homeostasis in the liver. Stabilizes clock proteins BMAL1 and CLOCK through O-glycosylation, which prevents their ubiquitination and subsequent degradation. Promotes the CLOCK-BMAL1-mediated transcription of genes in the negative loop of the circadian clock such as PER1/2 and CRY1/2. O-glycosylates HCFC1 and regulates its proteolytic processing and transcriptional activity. Regulates mitochondrial motility in neurons by mediating glycosylation of TRAK1. Glycosylates HOXA1. O-glycosylates FNIP1. Promotes autophagy by mediating O-glycosylation of ATG4B. In Oryctolagus cuniculus (Rabbit), this protein is UDP-N-acetylglucosamine--peptide N-acetylglucosaminyltransferase 110 kDa subunit (OGT).